The primary structure comprises 79 residues: Acyl carrier protein (79 aa).

In terms of domain architecture, Carrier spans 2–77 (SSIEDRVKKI…QAVDYIKKHL (76 aa)). Ser37 carries the O-(pantetheine 4'-phosphoryl)serine modification.

It belongs to the acyl carrier protein (ACP) family. 4'-phosphopantetheine is transferred from CoA to a specific serine of apo-ACP by AcpS. This modification is essential for activity because fatty acids are bound in thioester linkage to the sulfhydryl of the prosthetic group.

The protein localises to the cytoplasm. It participates in lipid metabolism; fatty acid biosynthesis. Functionally, carrier of the growing fatty acid chain in fatty acid biosynthesis. In Halorhodospira halophila (strain DSM 244 / SL1) (Ectothiorhodospira halophila (strain DSM 244 / SL1)), this protein is Acyl carrier protein.